The following is a 340-amino-acid chain: uncharacterized protein (340 aa).

The chain crosses the membrane as a helical span at residues 6–26; that stretch reads ITFGLLVLMVCVILFVLYVQL.

The protein resides in the cell membrane. This is an uncharacterized protein from Bacillus subtilis (strain 168).